Reading from the N-terminus, the 251-residue chain is Homeobox protein notochord (251 aa).

Positions 1 to 14 are enriched in pro residues; sequence MPSPRPRGSPPPAP. Residues 1–47 are disordered; sequence MPSPRPRGSPPPAPSGSRVRPPRSGRSPAPRSPTGPNTPRAPGRFES. Low complexity predominate over residues 15-35; the sequence is SGSRVRPPRSGRSPAPRSPTG. The segment at residues 156-215 is a DNA-binding region (homeobox); sequence QKRVRTMFNLEQLEELEKVFAKQHNLVGKKRAQLAARLKLTENQVRVWFQNRRVKYQKQQ. Residues 224–242 are compositionally biased toward low complexity; sequence AEAASLDEPSSSSIASIQS. Residues 224-251 are disordered; sequence AEAASLDEPSSSSIASIQSDDAESGVDG.

It localises to the nucleus. In terms of biological role, transcription regulator acting downstream of both FOXA2 and Brachyury (T) during notochord development. Required for node morphogenesis. Is essential for cilia formation in the posterior notochord (PNC) and for left-right patterning; acts upstream of FOXJ1 and RFX3 in this process and is required for the expression of various components important for axonemal assembly and function. Plays a role in regulating axial versus paraxial cell fate. Activates the transcription of ciliary proteins C11orf97 homolog, FAM183B and SPACA9 in the embryonic ventral node. This is Homeobox protein notochord (NOTO) from Homo sapiens (Human).